The primary structure comprises 510 residues: Amidophosphoribosyltransferase (510 aa).

C2 serves as the catalytic Nucleophile. The 238-residue stretch at 2–239 (CGILGIALAD…PGEAVIIPKD (238 aa)) folds into the Glutamine amidotransferase type-2 domain. Residues D373 and D374 each contribute to the Mg(2+) site.

In the C-terminal section; belongs to the purine/pyrimidine phosphoribosyltransferase family. It depends on Mg(2+) as a cofactor.

The enzyme catalyses 5-phospho-beta-D-ribosylamine + L-glutamate + diphosphate = 5-phospho-alpha-D-ribose 1-diphosphate + L-glutamine + H2O. It functions in the pathway purine metabolism; IMP biosynthesis via de novo pathway; N(1)-(5-phospho-D-ribosyl)glycinamide from 5-phospho-alpha-D-ribose 1-diphosphate: step 1/2. This Lachancea kluyveri (Yeast) protein is Amidophosphoribosyltransferase (ADE4).